Here is a 329-residue protein sequence, read N- to C-terminus: Acetyl-coenzyme A carboxylase carboxyl transferase subunit alpha (329 aa).

Residues 40-294 form the CoA carboxyltransferase C-terminal domain; the sequence is QLESLASRRR…RAALERHLGE (255 aa).

It belongs to the AccA family. As to quaternary structure, acetyl-CoA carboxylase is a heterohexamer composed of biotin carboxyl carrier protein (AccB), biotin carboxylase (AccC) and two subunits each of ACCase subunit alpha (AccA) and ACCase subunit beta (AccD).

Its subcellular location is the cytoplasm. It catalyses the reaction N(6)-carboxybiotinyl-L-lysyl-[protein] + acetyl-CoA = N(6)-biotinyl-L-lysyl-[protein] + malonyl-CoA. Its pathway is lipid metabolism; malonyl-CoA biosynthesis; malonyl-CoA from acetyl-CoA: step 1/1. In terms of biological role, component of the acetyl coenzyme A carboxylase (ACC) complex. First, biotin carboxylase catalyzes the carboxylation of biotin on its carrier protein (BCCP) and then the CO(2) group is transferred by the carboxyltransferase to acetyl-CoA to form malonyl-CoA. The sequence is that of Acetyl-coenzyme A carboxylase carboxyl transferase subunit alpha from Synechococcus sp. (strain CC9902).